The sequence spans 409 residues: MTQKHRQPEVNIGLVGHVDHGKTTLVESLSGEWTDQHSEEMKRGISIRLGYADATFRECPELDEPDRYTVEETCPDGSESEHLRTVSFVDAPGHETLMATMLSGAAIMDGAVLVIAANEPVPRAQTEEHLMALDIIGIDNIVIAQNKIDLVDREQALDNYEAIEEFVDGTVAEDAPVVPISAQQDVNMDLLMQTIESEIPTPDRDPDADARLQVARSFDINRPGTTWEDLTGGVLGGSLTQGQLEADDDIEIKPGREIEEGGQSEYQPVETTVRSLQAGGEFVDTVTPGGLLGVGTGLDPSLTKGDALAGQVAGPPGSLPPTRESFTMDVELLDRVVGEDAEEIEPISTGEPLMLTVGTATTVGSVTSARDDECEVQLKRPVCAPDGSKIAINRRVGARWRLIGVGTLR.

Positions Q7–D203 constitute a tr-type G domain. A G1 region spans residues G16–T23. Positions 19, 23, 44, and 46 each coordinate Mg(2+). D19–T24 is a GTP binding site. Residues G44–R48 form a G2 region. The segment at D90–G93 is G3. Residues N146–D149 and S181–Q183 contribute to the GTP site. A G4 region spans residues N146–D149. The segment at S181–Q183 is G5.

Belongs to the TRAFAC class translation factor GTPase superfamily. Classic translation factor GTPase family. EIF2G subfamily. Heterotrimer composed of an alpha, a beta and a gamma chain. Mg(2+) is required as a cofactor.

It carries out the reaction GTP + H2O = GDP + phosphate + H(+). Its function is as follows. eIF-2 functions in the early steps of protein synthesis by forming a ternary complex with GTP and initiator tRNA. The polypeptide is Translation initiation factor 2 subunit gamma (Natronomonas pharaonis (strain ATCC 35678 / DSM 2160 / CIP 103997 / JCM 8858 / NBRC 14720 / NCIMB 2260 / Gabara) (Halobacterium pharaonis)).